A 385-amino-acid chain; its full sequence is 1-deoxy-D-xylulose 5-phosphate reductoisomerase (385 aa).

NADPH is bound by residues Thr-10, Gly-11, Ser-12, Ile-13, Asn-38, and Asn-124. 1-deoxy-D-xylulose 5-phosphate is bound at residue Lys-125. Glu-126 lines the NADPH pocket. Residue Asp-150 participates in Mn(2+) binding. 4 residues coordinate 1-deoxy-D-xylulose 5-phosphate: Ser-151, Glu-152, Ser-176, and His-199. Position 152 (Glu-152) interacts with Mn(2+). Gly-205 lines the NADPH pocket. Residues Ser-212, Asn-217, Lys-218, and Glu-221 each contribute to the 1-deoxy-D-xylulose 5-phosphate site. A Mn(2+)-binding site is contributed by Glu-221.

Belongs to the DXR family. It depends on Mg(2+) as a cofactor. Requires Mn(2+) as cofactor.

The enzyme catalyses 2-C-methyl-D-erythritol 4-phosphate + NADP(+) = 1-deoxy-D-xylulose 5-phosphate + NADPH + H(+). Its pathway is isoprenoid biosynthesis; isopentenyl diphosphate biosynthesis via DXP pathway; isopentenyl diphosphate from 1-deoxy-D-xylulose 5-phosphate: step 1/6. Catalyzes the NADPH-dependent rearrangement and reduction of 1-deoxy-D-xylulose-5-phosphate (DXP) to 2-C-methyl-D-erythritol 4-phosphate (MEP). The chain is 1-deoxy-D-xylulose 5-phosphate reductoisomerase from Clostridium acetobutylicum (strain ATCC 824 / DSM 792 / JCM 1419 / IAM 19013 / LMG 5710 / NBRC 13948 / NRRL B-527 / VKM B-1787 / 2291 / W).